A 182-amino-acid chain; its full sequence is MSNQAVANRYAYALFQLAEEKSILSQVVQEMELVKEVVNTTPEFLQLLSHPKVTTEKKRAFIENSFKDSLSETSLHTLLLLVENKRIESLVDMIDSFKEMSYEAQDMAEAVVYSAKPLTSEEQAQIAVIFAKKVNKAKLLVTNVVNKDLLGGLKIRIGDRIYDGSVKSQLDRLERQLIAGTR.

The protein belongs to the ATPase delta chain family. In terms of assembly, F-type ATPases have 2 components, F(1) - the catalytic core - and F(0) - the membrane proton channel. F(1) has five subunits: alpha(3), beta(3), gamma(1), delta(1), epsilon(1). F(0) has three main subunits: a(1), b(2) and c(10-14). The alpha and beta chains form an alternating ring which encloses part of the gamma chain. F(1) is attached to F(0) by a central stalk formed by the gamma and epsilon chains, while a peripheral stalk is formed by the delta and b chains.

The protein localises to the cell membrane. In terms of biological role, f(1)F(0) ATP synthase produces ATP from ADP in the presence of a proton or sodium gradient. F-type ATPases consist of two structural domains, F(1) containing the extramembraneous catalytic core and F(0) containing the membrane proton channel, linked together by a central stalk and a peripheral stalk. During catalysis, ATP synthesis in the catalytic domain of F(1) is coupled via a rotary mechanism of the central stalk subunits to proton translocation. This protein is part of the stalk that links CF(0) to CF(1). It either transmits conformational changes from CF(0) to CF(1) or is implicated in proton conduction. The protein is ATP synthase subunit delta of Alkalihalophilus pseudofirmus (strain ATCC BAA-2126 / JCM 17055 / OF4) (Bacillus pseudofirmus).